Reading from the N-terminus, the 80-residue chain is Cytochrome c oxidase subunit 7B, mitochondrial (80 aa).

The transit peptide at 1–24 directs the protein to the mitochondrion; that stretch reads MLPLAKNALSRLQVRSIQQVVARQ. Residues 25–32 lie on the Mitochondrial matrix side of the membrane; sequence SHQKKTPT. Residues 33–59 form a helical membrane-spanning segment; sequence FHDKYGNAVLAGGSIFCISAWTYTATQ. Residues 60–80 are Mitochondrial intermembrane-facing; that stretch reads IGIEWNLSPVGRVTPKEWRDQ.

It belongs to the cytochrome c oxidase VIIb family. As to quaternary structure, component of the cytochrome c oxidase (complex IV, CIV), a multisubunit enzyme composed of 14 subunits. The complex is composed of a catalytic core of 3 subunits MT-CO1, MT-CO2 and MT-CO3, encoded in the mitochondrial DNA, and 11 supernumerary subunits COX4I, COX5A, COX5B, COX6A, COX6B, COX6C, COX7A, COX7B, COX7C, COX8 and NDUFA4, which are encoded in the nuclear genome. The complex exists as a monomer or a dimer and forms supercomplexes (SCs) in the inner mitochondrial membrane with NADH-ubiquinone oxidoreductase (complex I, CI) and ubiquinol-cytochrome c oxidoreductase (cytochrome b-c1 complex, complex III, CIII), resulting in different assemblies (supercomplex SCI(1)III(2)IV(1) and megacomplex MCI(2)III(2)IV(2)).

The protein localises to the mitochondrion inner membrane. Its pathway is energy metabolism; oxidative phosphorylation. In terms of biological role, component of the cytochrome c oxidase, the last enzyme in the mitochondrial electron transport chain which drives oxidative phosphorylation. The respiratory chain contains 3 multisubunit complexes succinate dehydrogenase (complex II, CII), ubiquinol-cytochrome c oxidoreductase (cytochrome b-c1 complex, complex III, CIII) and cytochrome c oxidase (complex IV, CIV), that cooperate to transfer electrons derived from NADH and succinate to molecular oxygen, creating an electrochemical gradient over the inner membrane that drives transmembrane transport and the ATP synthase. Cytochrome c oxidase is the component of the respiratory chain that catalyzes the reduction of oxygen to water. Electrons originating from reduced cytochrome c in the intermembrane space (IMS) are transferred via the dinuclear copper A center (CU(A)) of subunit 2 and heme A of subunit 1 to the active site in subunit 1, a binuclear center (BNC) formed by heme A3 and copper B (CU(B)). The BNC reduces molecular oxygen to 2 water molecules using 4 electrons from cytochrome c in the IMS and 4 protons from the mitochondrial matrix. Plays a role in proper central nervous system (CNS) development in vertebrates. This is Cytochrome c oxidase subunit 7B, mitochondrial (Cox7b) from Rattus norvegicus (Rat).